A 545-amino-acid chain; its full sequence is Chaperonin GroEL 2 (545 aa).

ATP-binding positions include 29 to 32, 86 to 90, G413, 479 to 481, and D495; these read TLGP, DGTTT, and NAA.

The protein belongs to the chaperonin (HSP60) family. As to quaternary structure, forms a cylinder of 14 subunits composed of two heptameric rings stacked back-to-back. Interacts with the co-chaperonin GroES.

The protein localises to the cytoplasm. The catalysed reaction is ATP + H2O + a folded polypeptide = ADP + phosphate + an unfolded polypeptide.. Functionally, together with its co-chaperonin GroES, plays an essential role in assisting protein folding. The GroEL-GroES system forms a nano-cage that allows encapsulation of the non-native substrate proteins and provides a physical environment optimized to promote and accelerate protein folding. This Prochlorococcus marinus (strain AS9601) protein is Chaperonin GroEL 2.